Consider the following 438-residue polypeptide: Enolase (438 aa).

The substrate site is built by histidine 159 and glutamate 168. Glutamate 211 functions as the Proton donor in the catalytic mechanism. Residues aspartate 246, glutamate 297, and aspartate 322 each contribute to the Mg(2+) site. Glutamate 297 and aspartate 322 together coordinate substrate. Catalysis depends on lysine 347, which acts as the Proton acceptor. Substrate-binding positions include 374-377 (SHRS) and lysine 398.

The protein belongs to the enolase family. Homodimer. Mg(2+) serves as cofactor.

The protein localises to the cytoplasm. It catalyses the reaction (2R)-2-phosphoglycerate = phosphoenolpyruvate + H2O. It functions in the pathway carbohydrate degradation; glycolysis; pyruvate from D-glyceraldehyde 3-phosphate: step 4/5. This is Enolase (ENO1) from Cryphonectria parasitica (Chestnut blight fungus).